The following is a 624-amino-acid chain: Heat shock factor protein 5 (624 aa).

Residues Asn11 to Leu228 mediate DNA binding. 5 disordered regions span residues Leu52–Gly77, Gly112–His138, Ser186–Val214, Cys429–Leu461, and Gly572–Leu605. Gly residues-rich tracts occupy residues Gly58–Gly77 and Gly112–Gly127. Composition is skewed to low complexity over residues Ser186–Gln197 and Pro442–Gln457. Position 600 is a phosphoserine (Ser600).

This sequence belongs to the HSF family. Homooligomer. As to expression, highly expressed in testis particularly in spermatocytes (at protein level). Not expressed in fetal testis and ovary.

It is found in the nucleus. The protein resides in the chromosome. Functionally, DNA-binding transcription factor that is essential for male fertility, spermatogenesis and meiotic prophase progression in spermatocytes under non-stress conditions. Positvely and negatively regulates gene expression to ensure progression of meiotic prophase beyond pachytene stage in spermatocytes. Plays a role in male germline meiotic sex chromosome remodeling and silencing through regulation of SMARCA4. This chain is Heat shock factor protein 5 (Hsf5), found in Mus musculus (Mouse).